We begin with the raw amino-acid sequence, 281 residues long: MRKVFKLNKVKVKELLKKVESEYRRDAEIILSYLLKVSPSQIPLMYAREIPEEIVKRFFKQMKERKKGIPTAYVIGEWECMGRVFKVKKGVLVPRPETEILIERTLELIPQDREMVGFELGSGTGCISINLLIERPKLVMYATDVNPDAVELTKENAKLHKVDDRLFVFLGNAFEPVKGMKFDFIVSNPPYIPENFWEILPEEVKKEGYTSLIGGKKGWEFYELIAEEGTKHLKENGFIALEIGHDQGKVVKELLEKKCFKVNIFKDYAGFDRVVIAQRWS.

Residues 121-125, aspartate 144, and asparagine 188 contribute to the S-adenosyl-L-methionine site; that span reads GSGTG. Residue 188-191 coordinates substrate; it reads NPPY.

This sequence belongs to the protein N5-glutamine methyltransferase family. PrmC subfamily.

The enzyme catalyses L-glutaminyl-[peptide chain release factor] + S-adenosyl-L-methionine = N(5)-methyl-L-glutaminyl-[peptide chain release factor] + S-adenosyl-L-homocysteine + H(+). Its function is as follows. Methylates the class 1 translation termination release factors RF1/PrfA and RF2/PrfB on the glutamine residue of the universally conserved GGQ motif. The sequence is that of Release factor glutamine methyltransferase from Aquifex aeolicus (strain VF5).